We begin with the raw amino-acid sequence, 328 residues long: Phosphate acyltransferase (328 aa).

The protein belongs to the PlsX family. In terms of assembly, homodimer. Probably interacts with PlsY.

It is found in the cytoplasm. It catalyses the reaction a fatty acyl-[ACP] + phosphate = an acyl phosphate + holo-[ACP]. The protein operates within lipid metabolism; phospholipid metabolism. Its function is as follows. Catalyzes the reversible formation of acyl-phosphate (acyl-PO(4)) from acyl-[acyl-carrier-protein] (acyl-ACP). This enzyme utilizes acyl-ACP as fatty acyl donor, but not acyl-CoA. The chain is Phosphate acyltransferase from Campylobacter jejuni (strain RM1221).